The sequence spans 361 residues: Ribosomal RNA large subunit methyltransferase M (361 aa).

Residues Ser-187, 220-223, Asp-239, Asp-259, and Asp-276 each bind S-adenosyl-L-methionine; that span reads CPGG. Lys-305 acts as the Proton acceptor in catalysis.

It belongs to the class I-like SAM-binding methyltransferase superfamily. RNA methyltransferase RlmE family. RlmM subfamily. In terms of assembly, monomer.

The protein resides in the cytoplasm. It carries out the reaction cytidine(2498) in 23S rRNA + S-adenosyl-L-methionine = 2'-O-methylcytidine(2498) in 23S rRNA + S-adenosyl-L-homocysteine + H(+). Its function is as follows. Catalyzes the 2'-O-methylation at nucleotide C2498 in 23S rRNA. This Shewanella putrefaciens (strain CN-32 / ATCC BAA-453) protein is Ribosomal RNA large subunit methyltransferase M.